The primary structure comprises 163 residues: 3-hydroxyacyl-[acyl-carrier-protein] dehydratase FabZ (163 aa).

His64 is an active-site residue.

This sequence belongs to the thioester dehydratase family. FabZ subfamily.

It is found in the cytoplasm. It carries out the reaction a (3R)-hydroxyacyl-[ACP] = a (2E)-enoyl-[ACP] + H2O. Involved in unsaturated fatty acids biosynthesis. Catalyzes the dehydration of short chain beta-hydroxyacyl-ACPs and long chain saturated and unsaturated beta-hydroxyacyl-ACPs. This is 3-hydroxyacyl-[acyl-carrier-protein] dehydratase FabZ from Caulobacter sp. (strain K31).